The sequence spans 456 residues: tRNA-2-methylthio-N(6)-dimethylallyladenosine synthase (456 aa).

The region spanning 2 to 119 (KKVFIKTYGC…LPDLIAARRR (118 aa)) is the MTTase N-terminal domain. Positions 11, 48, 82, 156, 160, and 163 each coordinate [4Fe-4S] cluster. The Radical SAM core domain maps to 142–375 (RVDGASAYVS…QATIEENVAR (234 aa)). The 71-residue stretch at 378–448 (QGMVGSVQRI…PHSLRGEVAE (71 aa)) folds into the TRAM domain.

Belongs to the methylthiotransferase family. MiaB subfamily. Monomer. [4Fe-4S] cluster is required as a cofactor.

The protein localises to the cytoplasm. The catalysed reaction is N(6)-dimethylallyladenosine(37) in tRNA + (sulfur carrier)-SH + AH2 + 2 S-adenosyl-L-methionine = 2-methylsulfanyl-N(6)-dimethylallyladenosine(37) in tRNA + (sulfur carrier)-H + 5'-deoxyadenosine + L-methionine + A + S-adenosyl-L-homocysteine + 2 H(+). Functionally, catalyzes the methylthiolation of N6-(dimethylallyl)adenosine (i(6)A), leading to the formation of 2-methylthio-N6-(dimethylallyl)adenosine (ms(2)i(6)A) at position 37 in tRNAs that read codons beginning with uridine. In Ralstonia pickettii (strain 12J), this protein is tRNA-2-methylthio-N(6)-dimethylallyladenosine synthase.